The following is a 296-amino-acid chain: Putative peptide transport system permease protein BruAb2_1032 (296 aa).

6 helical membrane passes run 35-55, 97-117, 131-151, 205-225, 229-249, and 260-280; these read IGLVLLLIVVLAAVLAPWITN, LWIGLTVAVLSAILGAIIGIA, VMDALMAFPAILLAIGISAAL, ILPNCLAPLLVTLTFVFAYAI, ATLSFLGIGTPPPHASWGSIV, and WWIMLFPGIAITISALAINLI. The ABC transmembrane type-1 domain occupies 97 to 281; the sequence is LWIGLTVAVL…ISALAINLIG (185 aa).

Belongs to the binding-protein-dependent transport system permease family. The complex is composed of two ATP-binding proteins (BruAb2_1033 and BruAb2_1034), two transmembrane proteins (BruAb2_1031 and BruAb2_1032) and a solute-binding protein (BruAb2_1030).

The protein resides in the cell inner membrane. Functionally, probably part of an ABC transporter complex that could be involved in peptide import. Probably responsible for the translocation of the substrate across the membrane. The protein is Putative peptide transport system permease protein BruAb2_1032 of Brucella abortus biovar 1 (strain 9-941).